Reading from the N-terminus, the 117-residue chain is Ubiquitin-like protein 3 (117 aa).

In terms of domain architecture, Ubiquitin-like spans 10–88; sequence INLRLILVSG…PFGKTTVMHL (79 aa). Residue Cys-113 is the site of S-palmitoyl cysteine attachment. Cysteine methyl ester is present on Cys-114. Cys-114 carries the S-geranylgeranyl cysteine lipid modification. The propeptide at 115-117 is removed in mature form; that stretch reads VIL.

It is found in the cell membrane. This chain is Ubiquitin-like protein 3 (UBL3), found in Bos taurus (Bovine).